Reading from the N-terminus, the 739-residue chain is BEL1-like homeodomain protein 2 (739 aa).

Disordered stretches follow at residues 23 to 73 and 143 to 222; these read SQDY…ESSV and LMNP…NSQT. Polar residues predominate over residues 41–58; that stretch reads NFSNGFDRSDSPNLTTQQ. Over residues 145 to 155 the composition is skewed to pro residues; it reads NPPPPQQPPSP. Positions 179–190 are enriched in low complexity; the sequence is TNTTHHQNYTNH. The interval 316–332 is SR/KY domain; the sequence is SRYTTAAQELLEEFCSV. The tract at residues 341–378 is disordered; the sequence is KLGNSSNPNTCGGDGGGSSPSSAGANKEHPPLSASDRI. Residues 376 to 447 are BELL domain; that stretch reads DRIEHQRRKV…CLKDAVAAQL (72 aa). The segment at residues 498 to 560 is a DNA-binding region (homeobox); it reads AWRPQRGLPE…NARVRLWKPM (63 aa). The interval 567–627 is disordered; the sequence is QESKEREREE…TAPDASDADA (61 aa). Acidic residues predominate over residues 576-585; it reads EELEENEEDQ. Residues 586 to 596 show a composition bias toward basic and acidic residues; that stretch reads ETKNSNDDKST. Positions 597–627 are enriched in low complexity; it reads KSNNNESNFTAVRTTSQTPTTTAPDASDADA.

It belongs to the TALE/BELL homeobox family. As to quaternary structure, may form heterodimeric complexes with TALE/KNOX proteins STM, KNAT1/BP, KNAT2 and KNAT5. Interacts with OFP1, OFP2, OFP4 and OFP5. Interacts with KNATM, isoform KNATM-B. In terms of tissue distribution, expressed in lateral organs.

It localises to the nucleus. Functionally, transcription factor that establishes leaf shape by repressing growth in specific subdomains of the leaf. Negatively regulates knox homeobox gene KNAT1/BP expression. The sequence is that of BEL1-like homeodomain protein 2 (BLH2) from Arabidopsis thaliana (Mouse-ear cress).